We begin with the raw amino-acid sequence, 444 residues long: tRNA modification GTPase MnmE (444 aa).

Residues Arg25, Glu83, and Lys122 each coordinate (6S)-5-formyl-5,6,7,8-tetrahydrofolate. The region spanning Gly218–Asp370 is the TrmE-type G domain. Residues Asn228–Ser233, Ser247–Thr253, and Asp272–Gly275 contribute to the GTP site. Ser232 and Thr253 together coordinate Mg(2+). Lys444 serves as a coordination point for (6S)-5-formyl-5,6,7,8-tetrahydrofolate.

The protein belongs to the TRAFAC class TrmE-Era-EngA-EngB-Septin-like GTPase superfamily. TrmE GTPase family. Homodimer. Heterotetramer of two MnmE and two MnmG subunits. K(+) serves as cofactor.

The protein localises to the cytoplasm. Exhibits a very high intrinsic GTPase hydrolysis rate. Involved in the addition of a carboxymethylaminomethyl (cmnm) group at the wobble position (U34) of certain tRNAs, forming tRNA-cmnm(5)s(2)U34. The chain is tRNA modification GTPase MnmE from Campylobacter curvus (strain 525.92).